The following is a 556-amino-acid chain: Formate--tetrahydrofolate ligase (556 aa).

65-72 (TPAGEGKS) lines the ATP pocket.

Belongs to the formate--tetrahydrofolate ligase family.

The enzyme catalyses (6S)-5,6,7,8-tetrahydrofolate + formate + ATP = (6R)-10-formyltetrahydrofolate + ADP + phosphate. The protein operates within one-carbon metabolism; tetrahydrofolate interconversion. The polypeptide is Formate--tetrahydrofolate ligase (Clostridium novyi (strain NT)).